The sequence spans 178 residues: 2-oxo-4-hydroxy-4-carboxy-5-ureidoimidazoline decarboxylase (178 aa).

The Proton donor role is filled by histidine 67. Residues proline 68, 84 to 88, and 119 to 123 contribute to the substrate site; these read SQREQ and FVLAA.

The protein belongs to the OHCU decarboxylase family.

Its subcellular location is the peroxisome. The enzyme catalyses 5-hydroxy-2-oxo-4-ureido-2,5-dihydro-1H-imidazole-5-carboxylate + H(+) = (S)-allantoin + CO2. The protein operates within purine metabolism; urate degradation; (S)-allantoin from urate: step 3/3. Functionally, catalyzes the stereoselective decarboxylation of 2-oxo-4-hydroxy-4-carboxy-5-ureidoimidazoline (OHCU) to (S)-allantoin. In Mus musculus (Mouse), this protein is 2-oxo-4-hydroxy-4-carboxy-5-ureidoimidazoline decarboxylase (Urad).